The primary structure comprises 547 residues: CTP synthase (547 aa).

Positions 1–265 are amidoligase domain; it reads MARFVFITGG…DQAVLDAFSI (265 aa). A CTP-binding site is contributed by Ser-13. Ser-13 contacts UTP. Residues 14–19 and Asp-71 contribute to the ATP site; that span reads SLGKGL. 2 residues coordinate Mg(2+): Asp-71 and Glu-139. CTP-binding positions include 146–148, 186–191, and Lys-222; these read DIE and KTKPTQ. UTP is bound by residues 186–191 and Lys-222; that span reads KTKPTQ. Positions 291 to 546 constitute a Glutamine amidotransferase type-1 domain; that stretch reads NVAIVGKYTQ…VRAAKEVSRL (256 aa). Position 353 (Gly-353) interacts with L-glutamine. Cys-380 serves as the catalytic Nucleophile; for glutamine hydrolysis. L-glutamine-binding positions include 381–384, Glu-404, and Arg-474; that span reads LGMQ. Active-site residues include His-519 and Glu-521.

This sequence belongs to the CTP synthase family. In terms of assembly, homotetramer.

The catalysed reaction is UTP + L-glutamine + ATP + H2O = CTP + L-glutamate + ADP + phosphate + 2 H(+). It catalyses the reaction L-glutamine + H2O = L-glutamate + NH4(+). It carries out the reaction UTP + NH4(+) + ATP = CTP + ADP + phosphate + 2 H(+). The protein operates within pyrimidine metabolism; CTP biosynthesis via de novo pathway; CTP from UDP: step 2/2. Allosterically activated by GTP, when glutamine is the substrate; GTP has no effect on the reaction when ammonia is the substrate. The allosteric effector GTP functions by stabilizing the protein conformation that binds the tetrahedral intermediate(s) formed during glutamine hydrolysis. Inhibited by the product CTP, via allosteric rather than competitive inhibition. Its function is as follows. Catalyzes the ATP-dependent amination of UTP to CTP with either L-glutamine or ammonia as the source of nitrogen. Regulates intracellular CTP levels through interactions with the four ribonucleotide triphosphates. This is CTP synthase from Dinoroseobacter shibae (strain DSM 16493 / NCIMB 14021 / DFL 12).